Here is a 92-residue protein sequence, read N- to C-terminus: MAQKFHVKRGDQVVVIAGSQKGKSGKVLEVLAAKQRARIEGVAMIKRHLKKSQEHPQGTIAEREGSVHISNLMLQSTFDASKRKKEAAPAKA.

Belongs to the universal ribosomal protein uL24 family. As to quaternary structure, part of the 50S ribosomal subunit.

Its function is as follows. One of two assembly initiator proteins, it binds directly to the 5'-end of the 23S rRNA, where it nucleates assembly of the 50S subunit. In terms of biological role, one of the proteins that surrounds the polypeptide exit tunnel on the outside of the subunit. This chain is Large ribosomal subunit protein uL24, found in Opitutus terrae (strain DSM 11246 / JCM 15787 / PB90-1).